The chain runs to 113 residues: PTS system fructose-like EIIB component 3 (113 aa).

The PTS EIIB type-2 domain maps to 1-100; that stretch reads MAYLVAVTAC…PQRVMSAVRK (100 aa). C10 (phosphocysteine intermediate) is an active-site residue. Phosphocysteine; by EIIA is present on C10.

It is found in the cytoplasm. It catalyses the reaction D-fructose(out) + N(pros)-phospho-L-histidyl-[protein] = D-fructose 1-phosphate(in) + L-histidyl-[protein]. In terms of biological role, the phosphoenolpyruvate-dependent sugar phosphotransferase system (sugar PTS), a major carbohydrate active transport system, catalyzes the phosphorylation of incoming sugar substrates concomitantly with their translocation across the cell membrane. In Escherichia coli (strain K12), this protein is PTS system fructose-like EIIB component 3 (frwD).